The primary structure comprises 309 residues: Dihydroorotate dehydrogenase B (NAD(+)), catalytic subunit (309 aa).

FMN contacts are provided by residues Ser21 and 45 to 46 (KA). Residues Lys45 and 69 to 73 (NAIGL) each bind substrate. FMN contacts are provided by Asn99 and Asn127. Substrate is bound at residue Asn127. Cys130 (nucleophile) is an active-site residue. Lys165 and Ile191 together coordinate FMN. A substrate-binding site is contributed by 192-193 (NT). FMN-binding positions include Gly217, 243–244 (GG), and 265–266 (GT).

It belongs to the dihydroorotate dehydrogenase family. Type 1 subfamily. In terms of assembly, heterotetramer of 2 PyrK and 2 PyrD type B subunits. FMN serves as cofactor.

It is found in the cytoplasm. It catalyses the reaction (S)-dihydroorotate + NAD(+) = orotate + NADH + H(+). Its pathway is pyrimidine metabolism; UMP biosynthesis via de novo pathway; orotate from (S)-dihydroorotate (NAD(+) route): step 1/1. In terms of biological role, catalyzes the conversion of dihydroorotate to orotate with NAD(+) as electron acceptor. The protein is Dihydroorotate dehydrogenase B (NAD(+)), catalytic subunit (pyrD) of Bacillus cytotoxicus (strain DSM 22905 / CIP 110041 / 391-98 / NVH 391-98).